The sequence spans 368 residues: tRNA-specific 2-thiouridylase MnmA (368 aa).

Residues 11–18 (GMSGGVDS) and Met-37 each bind ATP. Residues 97–99 (NPD) are interaction with target base in tRNA. Cys-102 functions as the Nucleophile in the catalytic mechanism. Cys-102 and Cys-199 form a disulfide bridge. Gly-127 lines the ATP pocket. The interval 149 to 151 (KDQ) is interaction with tRNA. The Cysteine persulfide intermediate role is filled by Cys-199. The tract at residues 311–312 (RY) is interaction with tRNA.

This sequence belongs to the MnmA/TRMU family. Interacts with TusE.

The protein resides in the cytoplasm. The enzyme catalyses S-sulfanyl-L-cysteinyl-[protein] + uridine(34) in tRNA + AH2 + ATP = 2-thiouridine(34) in tRNA + L-cysteinyl-[protein] + A + AMP + diphosphate + H(+). Catalyzes the 2-thiolation of uridine at the wobble position (U34) of tRNA(Lys), tRNA(Glu) and tRNA(Gln), leading to the formation of s(2)U34, the first step of tRNA-mnm(5)s(2)U34 synthesis. Sulfur is provided by IscS, via a sulfur-relay system. Binds ATP and its substrate tRNAs. In Salmonella choleraesuis (strain SC-B67), this protein is tRNA-specific 2-thiouridylase MnmA.